A 213-amino-acid polypeptide reads, in one-letter code: LexA repressor (213 aa).

Residues 29–49 (VREICNAVGFKSTSTVHSYLE) constitute a DNA-binding region (H-T-H motif). Active-site for autocatalytic cleavage activity residues include serine 136 and lysine 173.

Belongs to the peptidase S24 family. In terms of assembly, homodimer.

The catalysed reaction is Hydrolysis of Ala-|-Gly bond in repressor LexA.. In terms of biological role, represses a number of genes involved in the response to DNA damage (SOS response), including recA and lexA. In the presence of single-stranded DNA, RecA interacts with LexA causing an autocatalytic cleavage which disrupts the DNA-binding part of LexA, leading to derepression of the SOS regulon and eventually DNA repair. The sequence is that of LexA repressor from Acetivibrio thermocellus (strain ATCC 27405 / DSM 1237 / JCM 9322 / NBRC 103400 / NCIMB 10682 / NRRL B-4536 / VPI 7372) (Clostridium thermocellum).